The sequence spans 234 residues: Purine nucleoside phosphorylase DeoD-type (234 aa).

His4 lines the a purine D-ribonucleoside pocket. Phosphate contacts are provided by residues Gly20, Arg24, Arg43, and 87–90 (RIGS). Residues Glu162, 179 to 181 (EME), and 203 to 204 (SD) each bind a purine D-ribonucleoside. The active-site Proton donor is the Asp204.

This sequence belongs to the PNP/UDP phosphorylase family. As to quaternary structure, homohexamer; trimer of homodimers.

It catalyses the reaction a purine D-ribonucleoside + phosphate = a purine nucleobase + alpha-D-ribose 1-phosphate. The catalysed reaction is a purine 2'-deoxy-D-ribonucleoside + phosphate = a purine nucleobase + 2-deoxy-alpha-D-ribose 1-phosphate. Catalyzes the reversible phosphorolytic breakdown of the N-glycosidic bond in the beta-(deoxy)ribonucleoside molecules, with the formation of the corresponding free purine bases and pentose-1-phosphate. This chain is Purine nucleoside phosphorylase DeoD-type, found in Jannaschia sp. (strain CCS1).